The chain runs to 293 residues: Inhibitory synaptic factor 1 (293 aa).

Residues 1-26 form a disordered region; that stretch reads MNIRGAPDLGQPSDDPSSGGERERIR. The stretch at 30–63 forms a coiled coil; that stretch reads KMVIGQLEGILRELKEVAKELREVVSQIDKLTSD. Disordered regions lie at residues 120–186 and 200–293; these read TPSD…RERV and DDEE…RGKN. Residues 171–180 show a composition bias toward polar residues; sequence VKSQLPQRTP. The span at 200-215 shows a compositional bias: acidic residues; that stretch reads DDEEGDGEQEVEEEEV. Polar residues-rich tracts occupy residues 243 to 256 and 264 to 286; these read SPLTSRHSGSTLAP and RNSSTQTVSDKSTQTVLPYTATR.

The protein belongs to the INSYN1 family. In terms of assembly, interacts with GPHN.

It is found in the postsynaptic density. Component of the protein machinery at the inhibitory synapses, probably acting as a scaffold. Inhibitory synapses dampen neuronal activity through postsynaptic hyperpolarization. This synaptic inhibition is fundamental for the functioning of the central nervous system, shaping and orchestrating the flow of information through neuronal networks to generate a precise neural code. The polypeptide is Inhibitory synaptic factor 1 (Homo sapiens (Human)).